The sequence spans 90 residues: Chromosomal protein MC1c (90 aa).

Protects DNA against thermal denaturation and modulates transcription. The protein is Chromosomal protein MC1c of Methanothrix soehngenii (Methanosaeta concilii).